Reading from the N-terminus, the 454-residue chain is tRNA-2-methylthio-N(6)-dimethylallyladenosine synthase (454 aa).

An MTTase N-terminal domain is found at 6-122; the sequence is RRYHITTFGC…LKDLLESVFA (117 aa). [4Fe-4S] cluster contacts are provided by C15, C51, C85, C157, C161, and C164. The 238-residue stretch at 143–380 folds into the Radical SAM core domain; that stretch reads RDSTVTAWVN…NHLVNVKAAE (238 aa). Residues 383-447 enclose the TRAM domain; it reads QRYMGRIEEV…AFSLTGEPIE (65 aa).

The protein belongs to the methylthiotransferase family. MiaB subfamily. As to quaternary structure, monomer. The cofactor is [4Fe-4S] cluster.

It localises to the cytoplasm. The enzyme catalyses N(6)-dimethylallyladenosine(37) in tRNA + (sulfur carrier)-SH + AH2 + 2 S-adenosyl-L-methionine = 2-methylsulfanyl-N(6)-dimethylallyladenosine(37) in tRNA + (sulfur carrier)-H + 5'-deoxyadenosine + L-methionine + A + S-adenosyl-L-homocysteine + 2 H(+). Its function is as follows. Catalyzes the methylthiolation of N6-(dimethylallyl)adenosine (i(6)A), leading to the formation of 2-methylthio-N6-(dimethylallyl)adenosine (ms(2)i(6)A) at position 37 in tRNAs that read codons beginning with uridine. The chain is tRNA-2-methylthio-N(6)-dimethylallyladenosine synthase from Nostoc sp. (strain PCC 7120 / SAG 25.82 / UTEX 2576).